The following is a 264-amino-acid chain: Phosphonoacetaldehyde hydrolase (264 aa).

D9 serves as the catalytic Nucleophile. D9 and A11 together coordinate Mg(2+). K50 (schiff-base intermediate with substrate) is an active-site residue. D183 serves as a coordination point for Mg(2+).

It belongs to the HAD-like hydrolase superfamily. PhnX family. Homodimer. The cofactor is Mg(2+).

It catalyses the reaction phosphonoacetaldehyde + H2O = acetaldehyde + phosphate + H(+). Involved in phosphonate degradation. In Bacillus cereus (strain B4264), this protein is Phosphonoacetaldehyde hydrolase.